The chain runs to 356 residues: Dual-specificity RNA methyltransferase RlmN (356 aa).

Catalysis depends on Glu89, which acts as the Proton acceptor. In terms of domain architecture, Radical SAM core spans 108-341 (KHARYTICVS…CTIRESKGLD (234 aa)). Cys115 and Cys346 form a disulfide bridge. [4Fe-4S] cluster-binding residues include Cys122, Cys126, and Cys129. S-adenosyl-L-methionine contacts are provided by residues 172–173 (GE), Ser204, 227–229 (SLH), and Asn303. Catalysis depends on Cys346, which acts as the S-methylcysteine intermediate.

Belongs to the radical SAM superfamily. RlmN family. [4Fe-4S] cluster is required as a cofactor.

The protein resides in the cytoplasm. It carries out the reaction adenosine(2503) in 23S rRNA + 2 reduced [2Fe-2S]-[ferredoxin] + 2 S-adenosyl-L-methionine = 2-methyladenosine(2503) in 23S rRNA + 5'-deoxyadenosine + L-methionine + 2 oxidized [2Fe-2S]-[ferredoxin] + S-adenosyl-L-homocysteine. The catalysed reaction is adenosine(37) in tRNA + 2 reduced [2Fe-2S]-[ferredoxin] + 2 S-adenosyl-L-methionine = 2-methyladenosine(37) in tRNA + 5'-deoxyadenosine + L-methionine + 2 oxidized [2Fe-2S]-[ferredoxin] + S-adenosyl-L-homocysteine. Specifically methylates position 2 of adenine 2503 in 23S rRNA and position 2 of adenine 37 in tRNAs. m2A2503 modification seems to play a crucial role in the proofreading step occurring at the peptidyl transferase center and thus would serve to optimize ribosomal fidelity. The polypeptide is Dual-specificity RNA methyltransferase RlmN (Campylobacter lari (strain RM2100 / D67 / ATCC BAA-1060)).